Consider the following 212-residue polypeptide: tRNA(Phe) 7-((3-amino-3-carboxypropyl)-4-demethylwyosine(37)-N(4))-methyltransferase 2 (212 aa).

This sequence belongs to the TYW3 family.

It catalyses the reaction 4-demethyl-7-[(3S)-3-amino-3-carboxypropyl]wyosine(37) in tRNA(Phe) + S-adenosyl-L-methionine = 7-[(3S)-3-amino-3-carboxypropyl]wyosine(37) in tRNA(Phe) + S-adenosyl-L-homocysteine + H(+). S-adenosyl-L-methionine-dependent methyltransferase that acts as a component of the wyosine derivatives biosynthesis pathway. Probably methylates N-4 position of wybutosine-86 to produce wybutosine-72. The protein is tRNA(Phe) 7-((3-amino-3-carboxypropyl)-4-demethylwyosine(37)-N(4))-methyltransferase 2 of Thermococcus kodakarensis (strain ATCC BAA-918 / JCM 12380 / KOD1) (Pyrococcus kodakaraensis (strain KOD1)).